A 498-amino-acid polypeptide reads, in one-letter code: ATP synthase subunit beta, chloroplastic (498 aa).

172-179 (GGAGVGKT) is an ATP binding site.

Belongs to the ATPase alpha/beta chains family. In terms of assembly, F-type ATPases have 2 components, CF(1) - the catalytic core - and CF(0) - the membrane proton channel. CF(1) has five subunits: alpha(3), beta(3), gamma(1), delta(1), epsilon(1). CF(0) has four main subunits: a(1), b(1), b'(1) and c(9-12).

Its subcellular location is the plastid. The protein resides in the chloroplast thylakoid membrane. It catalyses the reaction ATP + H2O + 4 H(+)(in) = ADP + phosphate + 5 H(+)(out). Its function is as follows. Produces ATP from ADP in the presence of a proton gradient across the membrane. The catalytic sites are hosted primarily by the beta subunits. This chain is ATP synthase subunit beta, chloroplastic, found in Buxus microphylla (Littleleaf boxwood).